The chain runs to 88 residues: UPF0297 protein SAK_2030 (88 aa).

It belongs to the UPF0297 family.

The sequence is that of UPF0297 protein SAK_2030 from Streptococcus agalactiae serotype Ia (strain ATCC 27591 / A909 / CDC SS700).